Here is a 169-residue protein sequence, read N- to C-terminus: Crossover junction endodeoxyribonuclease RuvC (169 aa).

Catalysis depends on residues Asp-11, Glu-71, and Asp-143. Positions 11, 71, and 143 each coordinate Mg(2+).

It belongs to the RuvC family. Homodimer which binds Holliday junction (HJ) DNA. The HJ becomes 2-fold symmetrical on binding to RuvC with unstacked arms; it has a different conformation from HJ DNA in complex with RuvA. In the full resolvosome a probable DNA-RuvA(4)-RuvB(12)-RuvC(2) complex forms which resolves the HJ. Mg(2+) serves as cofactor.

Its subcellular location is the cytoplasm. It catalyses the reaction Endonucleolytic cleavage at a junction such as a reciprocal single-stranded crossover between two homologous DNA duplexes (Holliday junction).. The RuvA-RuvB-RuvC complex processes Holliday junction (HJ) DNA during genetic recombination and DNA repair. Endonuclease that resolves HJ intermediates. Cleaves cruciform DNA by making single-stranded nicks across the HJ at symmetrical positions within the homologous arms, yielding a 5'-phosphate and a 3'-hydroxyl group; requires a central core of homology in the junction. The consensus cleavage sequence is 5'-(A/T)TT(C/G)-3'. Cleavage occurs on the 3'-side of the TT dinucleotide at the point of strand exchange. HJ branch migration catalyzed by RuvA-RuvB allows RuvC to scan DNA until it finds its consensus sequence, where it cleaves and resolves the cruciform DNA. This Allorhizobium ampelinum (strain ATCC BAA-846 / DSM 112012 / S4) (Agrobacterium vitis (strain S4)) protein is Crossover junction endodeoxyribonuclease RuvC.